Reading from the N-terminus, the 81-residue chain is Photosystem I iron-sulfur center (81 aa).

2 consecutive 4Fe-4S ferredoxin-type domains span residues 1-31 and 39-68; these read MSHK…MVPW and IASS…IRVY. Residues cysteine 11, cysteine 14, cysteine 17, cysteine 21, cysteine 48, cysteine 51, cysteine 54, and cysteine 58 each coordinate [4Fe-4S] cluster.

In terms of assembly, the cyanobacterial PSI reaction center is composed of one copy each of PsaA,B,C,D,E,F,I,J,K,L,M and X, and forms trimeric complexes. [4Fe-4S] cluster serves as cofactor.

The protein localises to the cellular thylakoid membrane. It carries out the reaction reduced [plastocyanin] + hnu + oxidized [2Fe-2S]-[ferredoxin] = oxidized [plastocyanin] + reduced [2Fe-2S]-[ferredoxin]. Its function is as follows. Apoprotein for the two 4Fe-4S centers FA and FB of photosystem I (PSI); essential for photochemical activity. FB is the terminal electron acceptor of PSI, donating electrons to ferredoxin. The C-terminus interacts with PsaA/B/D and helps assemble the protein into the PSI complex. Required for binding of PsaD and PsaE to PSI. PSI is a plastocyanin/cytochrome c6-ferredoxin oxidoreductase, converting photonic excitation into a charge separation, which transfers an electron from the donor P700 chlorophyll pair to the spectroscopically characterized acceptors A0, A1, FX, FA and FB in turn. This chain is Photosystem I iron-sulfur center, found in Crocosphaera subtropica (strain ATCC 51142 / BH68) (Cyanothece sp. (strain ATCC 51142)).